The chain runs to 201 residues: MELVMKDAKSALEVSETTFGREFNEALVHQVVVAYAAGARQGTRAQLTRSEVSGGGKKPWRQKGTGRARAGSIRSPIWRSGGVTFAAKPQDHSQKVNKKMYRGAIRSILSELVRQERLIVVEKFGIEAPKTKELIAKLKEMELTDVLIVTAEVDENLFLAARNLYKVDVRDVAGIDPVSLIAFDKVLMTAEAVKQIEEMLA.

Residues 45-66 form a disordered region; it reads AQLTRSEVSGGGKKPWRQKGTG.

It belongs to the universal ribosomal protein uL4 family. Part of the 50S ribosomal subunit.

One of the primary rRNA binding proteins, this protein initially binds near the 5'-end of the 23S rRNA. It is important during the early stages of 50S assembly. It makes multiple contacts with different domains of the 23S rRNA in the assembled 50S subunit and ribosome. Functionally, forms part of the polypeptide exit tunnel. In Aeromonas salmonicida (strain A449), this protein is Large ribosomal subunit protein uL4.